The following is a 211-amino-acid chain: MASSLIAKRFLSSSLLSRSLLRPAASASHRSFDTNAMRQYDNRADDHSTDIDRHSERSFPSTARRDDIFLRCVGSIFSDSEFEPGSEHDGPGHGQSVPLRVARDRSWRWSGRGWDARETEDALHLRVDMPGLAKEDVKISVEQNTLIIKGEGAKEGDEEESARRYTSRIDLPDKLYKIDQIRAEMKNGVLKVVVPKMKEEERKDVISVKVE.

Residues 1–31 (MASSLIAKRFLSSSLLSRSLLRPAASASHRS) constitute a mitochondrion transit peptide. One can recognise a sHSP domain in the interval 105–211 (RSWRWSGRGW…RKDVISVKVE (107 aa)).

This sequence belongs to the small heat shock protein (HSP20) family.

The protein resides in the mitochondrion. The sequence is that of Heat shock 22 kDa protein, mitochondrial (HSP23.9) from Glycine max (Soybean).